The primary structure comprises 445 residues: Beclin-1 (445 aa).

The short motif at 103-122 (TMENLSRRLKVTGDLFDIMS) is the BH3 element. The stretch at 137-264 (DTLLDQLDTQ…QLDKLKKTNV (128 aa)) forms a coiled coil. An evolutionary conserved domain (ECD) region spans residues 240–445 (DDLKSVENQM…AWVSSQFYNK (206 aa)). The segment at 420 to 445 (WTKALKFMLTNLKWGLAWVSSQFYNK) is required for membrane-association.

This sequence belongs to the beclin family. As to quaternary structure, component of the PI3K (PI3KC3/PI3K-III/class III phosphatidylinositol 3-kinase) complex. Post-translationally, may be proteolytically processed by caspases; the C-terminal fragment(s) may induce apoptosis.

The protein localises to the cytoplasm. The protein resides in the golgi apparatus. It localises to the trans-Golgi network membrane. Its subcellular location is the endosome membrane. It is found in the endoplasmic reticulum membrane. The protein localises to the mitochondrion membrane. The protein resides in the cytoplasmic vesicle. It localises to the autophagosome. In terms of biological role, plays a central role in autophagy. Acts as core subunit of different PI3K complex forms that mediate formation of phosphatidylinositol 3-phosphate and are believed to play a role in multiple membrane trafficking pathways: PI3KC3-C1 is involved in initiation of autophagosomes and PI3KC3-C2 in maturation of autophagosomes and endocytosis. Involved in regulation of degradative endocytic trafficking and required for the abscission step in cytokinesis, probably in the context of PI3KC3-C2. Essential for the formation of PI3KC3-C2 but not PI3KC3-C1 PI3K complex forms. Involved in endocytosis including endosome formation in neuronal cells. The sequence is that of Beclin-1 (becn1) from Xenopus tropicalis (Western clawed frog).